We begin with the raw amino-acid sequence, 174 residues long: uncharacterized protein (174 aa).

Transmembrane regions (helical) follow at residues 8–28 (FLFI…NYVF) and 146–166 (IVSW…IQFI).

The protein resides in the cell membrane. This is an uncharacterized protein from Haemophilus influenzae (strain ATCC 51907 / DSM 11121 / KW20 / Rd).